A 485-amino-acid polypeptide reads, in one-letter code: Maturase K (485 aa).

It belongs to the intron maturase 2 family. MatK subfamily.

The protein localises to the plastid. The protein resides in the chloroplast. Functionally, usually encoded in the trnK tRNA gene intron. Probably assists in splicing its own and other chloroplast group II introns. This chain is Maturase K, found in Malus domestica (Apple).